The following is a 450-amino-acid chain: Phosphoglucosamine mutase (450 aa).

The active-site Phosphoserine intermediate is S101. S101, D240, D242, and D244 together coordinate Mg(2+). Residue S101 is modified to Phosphoserine.

Belongs to the phosphohexose mutase family. Mg(2+) serves as cofactor. Post-translationally, activated by phosphorylation.

It carries out the reaction alpha-D-glucosamine 1-phosphate = D-glucosamine 6-phosphate. Catalyzes the conversion of glucosamine-6-phosphate to glucosamine-1-phosphate. This chain is Phosphoglucosamine mutase, found in Streptococcus thermophilus (strain CNRZ 1066).